A 55-amino-acid chain; its full sequence is Trypsin inhibitor ClTI-1 (55 aa).

A Kazal-like domain is found at 1–55 (SIPPACDKYSRLPGCPRDYSPVCGTDGKTYPNECVLCLSNSEENKNVQIYKSGMC). 3 disulfides stabilise this stretch: Cys-6-Cys-37, Cys-15-Cys-34, and Cys-23-Cys-55.

Its subcellular location is the secreted. Inhibits trypsin and plasmin. The protein is Trypsin inhibitor ClTI-1 of Gallus gallus (Chicken).